Reading from the N-terminus, the 181-residue chain is MNDFLLISSLAELSSETKKSFGFNPNFLEANVLNIAILLSGVVYLGRNFLTSALEVRQQKVAEAIQEAEERLVQANSRLLESEKQLTQAQAVIEEIKKEAEKTARTVKESILAQGKLDIERLTNNGKSSIEKAELQIKKQIQQHITELAIQKVTVQLKEYMTPNLQSKVIDSNISNLGGQL.

Residues 31–50 (NVLNIAILLSGVVYLGRNFL) traverse the membrane as a helical segment.

Belongs to the ATPase B chain family. In terms of assembly, F-type ATPases have 2 components, F(1) - the catalytic core - and F(0) - the membrane proton channel. F(1) has five subunits: alpha(3), beta(3), gamma(1), delta(1), epsilon(1). F(0) has four main subunits: a(1), b(1), b'(1) and c(10-14). The alpha and beta chains form an alternating ring which encloses part of the gamma chain. F(1) is attached to F(0) by a central stalk formed by the gamma and epsilon chains, while a peripheral stalk is formed by the delta, b and b' chains.

It is found in the plastid. The protein localises to the chloroplast thylakoid membrane. F(1)F(0) ATP synthase produces ATP from ADP in the presence of a proton or sodium gradient. F-type ATPases consist of two structural domains, F(1) containing the extramembraneous catalytic core and F(0) containing the membrane proton channel, linked together by a central stalk and a peripheral stalk. During catalysis, ATP synthesis in the catalytic domain of F(1) is coupled via a rotary mechanism of the central stalk subunits to proton translocation. In terms of biological role, component of the F(0) channel, it forms part of the peripheral stalk, linking F(1) to F(0). This is ATP synthase subunit b, chloroplastic from Rhodomonas salina (Cryptomonas salina).